The following is a 323-amino-acid chain: Fructokinase-1 (323 aa).

The protein belongs to the carbohydrate kinase PfkB family. Expressed in stems, at higher levels in roots, and hardly detectable in leaves.

It catalyses the reaction D-fructose + ATP = D-fructose 6-phosphate + ADP + H(+). It functions in the pathway glycan biosynthesis; starch biosynthesis. With respect to regulation, inhibited at high fructose. Its function is as follows. May play an important role in maintaining the flux of carbon towards starch formation in endosperm. May also be involved in a sugar-sensing pathway. The polypeptide is Fructokinase-1 (FRK1) (Zea mays (Maize)).